Here is a 29-residue protein sequence, read N- to C-terminus: Cytochrome b6-f complex subunit 8 (29 aa).

The helical transmembrane segment at 3 to 23 (ILTLGWVSLLVVFTWSIAMVV) threads the bilayer.

Belongs to the PetN family. In terms of assembly, the 4 large subunits of the cytochrome b6-f complex are cytochrome b6, subunit IV (17 kDa polypeptide, PetD), cytochrome f and the Rieske protein, while the 4 small subunits are PetG, PetL, PetM and PetN. The complex functions as a dimer.

Its subcellular location is the cellular thylakoid membrane. Component of the cytochrome b6-f complex, which mediates electron transfer between photosystem II (PSII) and photosystem I (PSI), cyclic electron flow around PSI, and state transitions. The sequence is that of Cytochrome b6-f complex subunit 8 from Nostoc punctiforme (strain ATCC 29133 / PCC 73102).